The chain runs to 348 residues: D-alanine--D-alanine ligase (348 aa).

The 203-residue stretch at 132-334 (KRVLESIGIP…YPDLIEELVT (203 aa)) folds into the ATP-grasp domain. 162 to 217 (LARLTFPIFVKPANMGSSVGISKAQTKVELRKAIQLALTYDSRVLIEQGVVAREIE) is a binding site for ATP. Mg(2+)-binding residues include Asp288, Glu301, and Asn303.

It belongs to the D-alanine--D-alanine ligase family. Mg(2+) is required as a cofactor. Requires Mn(2+) as cofactor.

The protein localises to the cytoplasm. It catalyses the reaction 2 D-alanine + ATP = D-alanyl-D-alanine + ADP + phosphate + H(+). Its pathway is cell wall biogenesis; peptidoglycan biosynthesis. Cell wall formation. The polypeptide is D-alanine--D-alanine ligase (Streptococcus pyogenes serotype M3 (strain SSI-1)).